A 96-amino-acid chain; its full sequence is Protein YdfX (96 aa).

In Escherichia coli (strain K12), this protein is Protein YdfX (ydfX).